The chain runs to 396 residues: L-lactate dehydrogenase (396 aa).

The 380-residue stretch at 1–380 (MIISAASDYR…SGDSLVQELG (380 aa)) folds into the FMN hydroxy acid dehydrogenase domain. Tyr-24 serves as a coordination point for substrate. Residues Ser-106 and Gln-127 each coordinate FMN. Tyr-129 provides a ligand contact to substrate. Thr-155 is an FMN binding site. Position 164 (Arg-164) interacts with substrate. An FMN-binding site is contributed by Lys-251. His-275 (proton acceptor) is an active-site residue. A substrate-binding site is contributed by Arg-278. 306–330 (DSGIRNGLDVVRMIALGADTVLLGR) provides a ligand contact to FMN.

The protein belongs to the FMN-dependent alpha-hydroxy acid dehydrogenase family. It depends on FMN as a cofactor.

The protein resides in the cell inner membrane. The catalysed reaction is (S)-lactate + A = pyruvate + AH2. Functionally, catalyzes the conversion of L-lactate to pyruvate. Is coupled to the respiratory chain. The protein is L-lactate dehydrogenase of Salmonella paratyphi B (strain ATCC BAA-1250 / SPB7).